A 544-amino-acid chain; its full sequence is CTP synthase (544 aa).

Residues Met-1–Leu-267 are amidoligase domain. A CTP-binding site is contributed by Ser-13. Residue Ser-13 participates in UTP binding. Position 14–19 (Ser-14–Ile-19) interacts with ATP. Tyr-54 contributes to the L-glutamine binding site. Asp-71 provides a ligand contact to ATP. Asp-71 and Glu-141 together coordinate Mg(2+). CTP is bound by residues Asp-148–Glu-150, Lys-188–Gln-193, and Lys-224. UTP is bound by residues Lys-188 to Gln-193 and Lys-224. The 243-residue stretch at Glu-292–Gln-534 folds into the Glutamine amidotransferase type-1 domain. Gly-354 lines the L-glutamine pocket. Cys-381 acts as the Nucleophile; for glutamine hydrolysis in catalysis. Residues Leu-382–Gln-385, Glu-405, and Arg-462 contribute to the L-glutamine site. Residues His-507 and Glu-509 contribute to the active site.

It belongs to the CTP synthase family. As to quaternary structure, homotetramer.

It carries out the reaction UTP + L-glutamine + ATP + H2O = CTP + L-glutamate + ADP + phosphate + 2 H(+). The catalysed reaction is L-glutamine + H2O = L-glutamate + NH4(+). It catalyses the reaction UTP + NH4(+) + ATP = CTP + ADP + phosphate + 2 H(+). Its pathway is pyrimidine metabolism; CTP biosynthesis via de novo pathway; CTP from UDP: step 2/2. Its activity is regulated as follows. Allosterically activated by GTP, when glutamine is the substrate; GTP has no effect on the reaction when ammonia is the substrate. The allosteric effector GTP functions by stabilizing the protein conformation that binds the tetrahedral intermediate(s) formed during glutamine hydrolysis. Inhibited by the product CTP, via allosteric rather than competitive inhibition. Catalyzes the ATP-dependent amination of UTP to CTP with either L-glutamine or ammonia as the source of nitrogen. Regulates intracellular CTP levels through interactions with the four ribonucleotide triphosphates. The sequence is that of CTP synthase from Synechococcus sp. (strain JA-2-3B'a(2-13)) (Cyanobacteria bacterium Yellowstone B-Prime).